Reading from the N-terminus, the 88-residue chain is Small ribosomal subunit protein bS20 (88 aa).

The segment at 1 to 20 (MANTKSARKSLIKSKQQRKC) is disordered.

It belongs to the bacterial ribosomal protein bS20 family.

Its function is as follows. Binds directly to 16S ribosomal RNA. This chain is Small ribosomal subunit protein bS20, found in Blochmanniella pennsylvanica (strain BPEN).